Reading from the N-terminus, the 556-residue chain is MCLAVGVGVRAPKHVPQIRRLGRAGRRLRCVTNCALGSCPIVTVQQPGRDFSSPREECGVFGVWAPGELVAKLTYFGLYALQHRGQEAAGIAVADGSQVLVFKDLGLVSQVFDEQTLAAMEGHVAIGHCRYSTTGDTTWENAQPVFRNIAAGSGVALGHNGNLVNTAELAARARDAGLIAKRCPAPATTDSDILGALLAHGAADSTLEQAALELLPTVRGAFCLTFMDENTLYACRDPYGVRPLSLGRLDRGWVVASETAGLDIVGASFVRDIEPGELLAIDADGVRSTRFANPTPKGCVFEYVYLARPDSTLAGRSVHGTRVEIGRRLARECPVEADLVIGVPESGTPAAVGYAQESGISYGQGLMKNAYVGRTFIQPSQTIRQLGIRLKLNPLKEVIRGKRLIVVDDSVVRGNTQRALVRMLREAGAVELHVRIASPPVKWPCFYGIDFPSPAELIANVVADEEEMLEAVRQGIGADTLGYISLRGMIAASEQPASRLCYACFDGRYPIELPSEAMLGKNVIEHMLANAARGAGLRDLAADQVPVDADENCVWR.

Positions 1 to 57 are excised as a propeptide; it reads MCLAVGVGVRAPKHVPQIRRLGRAGRRLRCVTNCALGSCPIVTVQQPGRDFSSPREE. Cys58 (nucleophile) is an active-site residue. One can recognise a Glutamine amidotransferase type-2 domain in the interval 58-284; sequence CGVFGVWAPG…PGELLAIDAD (227 aa). Cys299 is a [4Fe-4S] cluster binding site. Mg(2+) is bound by residues Ser346, Asp408, and Asp409. [4Fe-4S] cluster-binding residues include Cys445, Cys501, and Cys504.

In the C-terminal section; belongs to the purine/pyrimidine phosphoribosyltransferase family. It depends on Mg(2+) as a cofactor. The cofactor is [4Fe-4S] cluster.

It carries out the reaction 5-phospho-beta-D-ribosylamine + L-glutamate + diphosphate = 5-phospho-alpha-D-ribose 1-diphosphate + L-glutamine + H2O. The protein operates within purine metabolism; IMP biosynthesis via de novo pathway; N(1)-(5-phospho-D-ribosyl)glycinamide from 5-phospho-alpha-D-ribose 1-diphosphate: step 1/2. Functionally, catalyzes the formation of phosphoribosylamine from phosphoribosylpyrophosphate (PRPP) and glutamine. The polypeptide is Amidophosphoribosyltransferase (Mycobacterium leprae (strain TN)).